The chain runs to 325 residues: KYENVEKGDEAPKKCGVTHTNLESDEPIEKASQLFGTSEQQRFDPRHIELVIVADHGMVMKHNGDLTAVRTWLHQIGNNLNVMFADLNIRITMAGLEMWSEKDLIDIQSAASETLRLFGEWRERYLLNRRMHDNAQLLTTVNLDGDTVGLAYVGGMCDPKNSVGIVQDHSRIAREVAATMAHELGHNLGMAHDGNQCNCGANGCVMSEEIIERTSYQFSDCSKEEYRTFLDNHNPQRILNEPLRTDTVSTPVYGNVLQNSPHPCCDPVTCKPKAWEHCISGPCCRDCKFLRPGTVCRVARGDWNDDFCTGRSSECESNPWNFWNH.

Positions Lys1–Glu39 are excised as a propeptide. The residue at position 40 (Gln40) is a Pyrrolidone carboxylic acid. In terms of domain architecture, Peptidase M12B spans Arg46–Pro242. His182 serves as a coordination point for Zn(2+). Residue Glu183 is part of the active site. Residues His186 and His192 each contribute to the Zn(2+) site. 2 cysteine pairs are disulfide-bonded: Cys197-Cys221 and Cys199-Cys204. Positions Leu243–Leu257 are excised as a propeptide. The Disintegrin domain occupies Thr250 to Phe322. A Pyrrolidone carboxylic acid modification is found at Gln258. 4 disulfides stabilise this stretch: Cys264/Cys287, Cys278/Cys284, Cys283/Cys308, and Cys296/Cys315. A Cell attachment site motif is present at residues Arg300–Asp302.

This sequence belongs to the venom metalloproteinase (M12B) family. P-II subfamily. P-IIe sub-subfamily. In terms of assembly, heterodimer of bitisgabonin and gabonin-1 (bitisgabonin-1) or gabonin-2 (bitisgabonin-2); disulfide-linked. Requires Zn(2+) as cofactor. In terms of tissue distribution, expressed by the venom gland.

The protein resides in the secreted. Impairs hemostasis in the envenomed animal. In terms of biological role, in dimer with gabonin-1 (bitisgabonin-1), is a potent inhibitor of the adhesion of the RGD-dependent integrin alpha-5/beta-1 (ITGA5/ITGB1) to immobilized fibronectin. Its function is as follows. In dimer with gabonin-2 (bitisgabonin-2), preferentially inhibits the adhesion of the alpha-4/beta-1 (ITGA4/ITGB1) and alpha-9/beta-1 (ITGA9/ITGB1) integrins to VCAM-1 and also acts as a strong antagonist of alpha-5/beta-1 (ITGA5/ITGB1). The protein is Zinc metalloproteinase/disintegrin of Bitis gabonica (Gaboon adder).